The chain runs to 609 residues: Protein FRIGIDA (609 aa).

Over residues 1–18 the composition is skewed to low complexity; sequence MSNYPPTVAAQPTTTANP. Positions 1–31 are disordered; sequence MSNYPPTVAAQPTTTANPLLQRHQSEQRRRE. Coiled coils occupy residues 60-97 and 409-440; these read DELAAFSVAVETFKRQFDDLQKHIESIENAIDSKLESN and QIKEQIVSLEKDTLQLDKEMEEKARSLSLMEE. 2 disordered regions span residues 454-488 and 587-609; these read RPRLSPMEMPPVTSSSYSPIYRDRSFPSQRDDDQD and SEERYLGLSNQRSPRSNSSLDPK. The segment covering 474–484 has biased composition (basic and acidic residues); sequence YRDRSFPSQRD. Over residues 594 to 609 the composition is skewed to polar residues; that stretch reads LSNQRSPRSNSSLDPK.

The protein belongs to the Frigida family. Homodimer. Component of the transcription activator complex FRI-C composed of FRI, FRL1, SUF4, FLX and FES1. Interacts (via N-terminus) with FRL1 and (via C-terminus) with FLX (via N-terminus), SUF4 (via C-terminus) and FES1 (via C-terminus). Interacts with ASHH2 and RIN1, a component of the SWR1 chromatin-remodeling complex. Interacts with CBP20, FIP1 and FIP2. In terms of tissue distribution, expressed in ovules, but not in stamens.

The protein resides in the nucleus speckle. In terms of biological role, required for the regulation of flowering time in the late-flowering phenotype. Involved in the enrichment of a WDR5A-containing COMPASS-like complex at the 'FLOWERING LOCUS C' that trimethylates histone H3 'Lys-4', leading to FLC up-regulation and RNA levels increase. Variants with an early-flowering phenotype (Including cv. Columbia, cv. Landsberg Erecta and cv. Wassilewskija) show loss-of-function mutations of FRI. Able to delay flowering independently of FRL1 activity. Dispensable for the reactivation of FLC in early embryogenesis, but required to maintain high levels of FLC expression in later embryonic and vegetative development. Suppresses the repression of FLC by the autonomous pathway, but has no effect on the expression of the genes involved in this pathway. The chain is Protein FRIGIDA from Arabidopsis thaliana (Mouse-ear cress).